The chain runs to 373 residues: Probable tRNA sulfurtransferase (373 aa).

Residues 54–158 (NKNIEELSKV…NDVAYFYHKI (105 aa)) enclose the THUMP domain. ATP contacts are provided by residues 176 to 177 (LF), 201 to 202 (NF), Lys256, Gly278, and Gln287.

The protein belongs to the ThiI family.

It is found in the cytoplasm. It catalyses the reaction [ThiI sulfur-carrier protein]-S-sulfanyl-L-cysteine + a uridine in tRNA + 2 reduced [2Fe-2S]-[ferredoxin] + ATP + H(+) = [ThiI sulfur-carrier protein]-L-cysteine + a 4-thiouridine in tRNA + 2 oxidized [2Fe-2S]-[ferredoxin] + AMP + diphosphate. It carries out the reaction [ThiS sulfur-carrier protein]-C-terminal Gly-Gly-AMP + S-sulfanyl-L-cysteinyl-[cysteine desulfurase] + AH2 = [ThiS sulfur-carrier protein]-C-terminal-Gly-aminoethanethioate + L-cysteinyl-[cysteine desulfurase] + A + AMP + 2 H(+). It participates in cofactor biosynthesis; thiamine diphosphate biosynthesis. Its function is as follows. Catalyzes the ATP-dependent transfer of a sulfur to tRNA to produce 4-thiouridine in position 8 of tRNAs, which functions as a near-UV photosensor. Also catalyzes the transfer of sulfur to the sulfur carrier protein ThiS, forming ThiS-thiocarboxylate. This is a step in the synthesis of thiazole, in the thiamine biosynthesis pathway. The sulfur is donated as persulfide by IscS. This is Probable tRNA sulfurtransferase from Saccharolobus islandicus (strain M.16.27) (Sulfolobus islandicus).